The sequence spans 365 residues: DNA polymerase IV (365 aa).

The UmuC domain occupies 14-198 (IIHIDMDAFF…LPIEKFHGVG (185 aa)). Residues Asp-18 and Asp-116 each coordinate Mg(2+). Residue Glu-117 is part of the active site.

Belongs to the DNA polymerase type-Y family. Monomer. Requires Mg(2+) as cofactor.

The protein localises to the cytoplasm. It catalyses the reaction DNA(n) + a 2'-deoxyribonucleoside 5'-triphosphate = DNA(n+1) + diphosphate. Functionally, poorly processive, error-prone DNA polymerase involved in untargeted mutagenesis. Copies undamaged DNA at stalled replication forks, which arise in vivo from mismatched or misaligned primer ends. These misaligned primers can be extended by PolIV. Exhibits no 3'-5' exonuclease (proofreading) activity. May be involved in translesional synthesis, in conjunction with the beta clamp from PolIII. This chain is DNA polymerase IV, found in Streptococcus pyogenes serotype M3 (strain ATCC BAA-595 / MGAS315).